Reading from the N-terminus, the 399-residue chain is uncharacterized protein (399 aa).

The disordered stretch occupies residues 375-399; the sequence is AAGGHRGSHGKSEQAATVRVVDDRR.

The protein belongs to the mycobacterial PPE family.

This is an uncharacterized protein from Mycobacterium tuberculosis (strain ATCC 25618 / H37Rv).